The chain runs to 387 residues: Large ribosomal subunit protein uL3 (387 aa).

It belongs to the universal ribosomal protein uL3 family.

It is found in the cytoplasm. The chain is Large ribosomal subunit protein uL3 (RPL3) from Candida glabrata (strain ATCC 2001 / BCRC 20586 / JCM 3761 / NBRC 0622 / NRRL Y-65 / CBS 138) (Yeast).